The sequence spans 318 residues: Pyrimidine-specific ribonucleoside hydrolase RihA (318 aa).

Residue H240 is part of the active site.

The protein belongs to the IUNH family. RihA subfamily.

Functionally, hydrolyzes cytidine or uridine to ribose and cytosine or uracil, respectively. This is Pyrimidine-specific ribonucleoside hydrolase RihA from Shewanella sp. (strain ANA-3).